The following is a 246-amino-acid chain: Pyridoxine 5'-phosphate synthase (246 aa).

Position 12 (N12) interacts with 3-amino-2-oxopropyl phosphate. 14-15 contacts 1-deoxy-D-xylulose 5-phosphate; the sequence is DH. R23 serves as a coordination point for 3-amino-2-oxopropyl phosphate. H48 acts as the Proton acceptor in catalysis. 2 residues coordinate 1-deoxy-D-xylulose 5-phosphate: R50 and H55. Catalysis depends on E75, which acts as the Proton acceptor. T105 contacts 1-deoxy-D-xylulose 5-phosphate. H196 functions as the Proton donor in the catalytic mechanism. 3-amino-2-oxopropyl phosphate contacts are provided by residues G197 and 218–219; that span reads GH.

The protein belongs to the PNP synthase family. Homooctamer; tetramer of dimers.

The protein localises to the cytoplasm. It carries out the reaction 3-amino-2-oxopropyl phosphate + 1-deoxy-D-xylulose 5-phosphate = pyridoxine 5'-phosphate + phosphate + 2 H2O + H(+). It participates in cofactor biosynthesis; pyridoxine 5'-phosphate biosynthesis; pyridoxine 5'-phosphate from D-erythrose 4-phosphate: step 5/5. Functionally, catalyzes the complicated ring closure reaction between the two acyclic compounds 1-deoxy-D-xylulose-5-phosphate (DXP) and 3-amino-2-oxopropyl phosphate (1-amino-acetone-3-phosphate or AAP) to form pyridoxine 5'-phosphate (PNP) and inorganic phosphate. This is Pyridoxine 5'-phosphate synthase from Pseudomonas putida (strain W619).